We begin with the raw amino-acid sequence, 220 residues long: Sec-independent protein translocase protein TatB (220 aa).

Residues 1–21 form a helical membrane-spanning segment; it reads MFDIGFSELLLVLVIGLVVLG. Positions 192–220 are disordered; the sequence is KQQIDTIDSHGTDLSSAGPSRIHQPGGDQ.

The protein belongs to the TatB family. In terms of assembly, the Tat system comprises two distinct complexes: a TatABC complex, containing multiple copies of TatA, TatB and TatC subunits, and a separate TatA complex, containing only TatA subunits. Substrates initially bind to the TatABC complex, which probably triggers association of the separate TatA complex to form the active translocon.

Its subcellular location is the cell inner membrane. In terms of biological role, part of the twin-arginine translocation (Tat) system that transports large folded proteins containing a characteristic twin-arginine motif in their signal peptide across membranes. Together with TatC, TatB is part of a receptor directly interacting with Tat signal peptides. TatB may form an oligomeric binding site that transiently accommodates folded Tat precursor proteins before their translocation. The sequence is that of Sec-independent protein translocase protein TatB from Yersinia pestis bv. Antiqua (strain Antiqua).